We begin with the raw amino-acid sequence, 210 residues long: Imidazole glycerol phosphate synthase subunit HisH (210 aa).

The Glutamine amidotransferase type-1 domain occupies 1–205 (MIAVINYGAG…VELALSRGSG (205 aa)). Cys-79 functions as the Nucleophile in the catalytic mechanism. Catalysis depends on residues His-180 and Glu-182.

As to quaternary structure, heterodimer of HisH and HisF.

It localises to the cytoplasm. It catalyses the reaction 5-[(5-phospho-1-deoxy-D-ribulos-1-ylimino)methylamino]-1-(5-phospho-beta-D-ribosyl)imidazole-4-carboxamide + L-glutamine = D-erythro-1-(imidazol-4-yl)glycerol 3-phosphate + 5-amino-1-(5-phospho-beta-D-ribosyl)imidazole-4-carboxamide + L-glutamate + H(+). The catalysed reaction is L-glutamine + H2O = L-glutamate + NH4(+). It participates in amino-acid biosynthesis; L-histidine biosynthesis; L-histidine from 5-phospho-alpha-D-ribose 1-diphosphate: step 5/9. Its function is as follows. IGPS catalyzes the conversion of PRFAR and glutamine to IGP, AICAR and glutamate. The HisH subunit catalyzes the hydrolysis of glutamine to glutamate and ammonia as part of the synthesis of IGP and AICAR. The resulting ammonia molecule is channeled to the active site of HisF. In Herpetosiphon aurantiacus (strain ATCC 23779 / DSM 785 / 114-95), this protein is Imidazole glycerol phosphate synthase subunit HisH.